A 267-amino-acid polypeptide reads, in one-letter code: 4-hydroxy-tetrahydrodipicolinate reductase (267 aa).

NAD(+) is bound by residues 9–14 (GAGGRM) and Asp-35. Position 36 (Arg-36) interacts with NADP(+). NAD(+) contacts are provided by residues 99–101 (GTT) and 123–126 (AANY). Residue His-156 is the Proton donor/acceptor of the active site. Residue His-157 participates in (S)-2,3,4,5-tetrahydrodipicolinate binding. Residue Lys-160 is the Proton donor of the active site. 166–167 (GT) contributes to the (S)-2,3,4,5-tetrahydrodipicolinate binding site.

The protein belongs to the DapB family.

It localises to the cytoplasm. The enzyme catalyses (S)-2,3,4,5-tetrahydrodipicolinate + NAD(+) + H2O = (2S,4S)-4-hydroxy-2,3,4,5-tetrahydrodipicolinate + NADH + H(+). The catalysed reaction is (S)-2,3,4,5-tetrahydrodipicolinate + NADP(+) + H2O = (2S,4S)-4-hydroxy-2,3,4,5-tetrahydrodipicolinate + NADPH + H(+). The protein operates within amino-acid biosynthesis; L-lysine biosynthesis via DAP pathway; (S)-tetrahydrodipicolinate from L-aspartate: step 4/4. Catalyzes the conversion of 4-hydroxy-tetrahydrodipicolinate (HTPA) to tetrahydrodipicolinate. The protein is 4-hydroxy-tetrahydrodipicolinate reductase of Halorhodospira halophila (strain DSM 244 / SL1) (Ectothiorhodospira halophila (strain DSM 244 / SL1)).